We begin with the raw amino-acid sequence, 205 residues long: ATP-dependent Clp protease proteolytic subunit (205 aa).

The active-site Nucleophile is the Ser-109. The active site involves His-134.

It belongs to the peptidase S14 family. Fourteen ClpP subunits assemble into 2 heptameric rings which stack back to back to give a disk-like structure with a central cavity, resembling the structure of eukaryotic proteasomes.

Its subcellular location is the cytoplasm. The catalysed reaction is Hydrolysis of proteins to small peptides in the presence of ATP and magnesium. alpha-casein is the usual test substrate. In the absence of ATP, only oligopeptides shorter than five residues are hydrolyzed (such as succinyl-Leu-Tyr-|-NHMec, and Leu-Tyr-Leu-|-Tyr-Trp, in which cleavage of the -Tyr-|-Leu- and -Tyr-|-Trp bonds also occurs).. Its function is as follows. Cleaves peptides in various proteins in a process that requires ATP hydrolysis. Has a chymotrypsin-like activity. Plays a major role in the degradation of misfolded proteins. The protein is ATP-dependent Clp protease proteolytic subunit of Baumannia cicadellinicola subsp. Homalodisca coagulata.